The primary structure comprises 251 residues: Hydroxyacylglutathione hydrolase (251 aa).

Residues H53, H55, D57, H58, H110, D127, and H165 each contribute to the Zn(2+) site.

It belongs to the metallo-beta-lactamase superfamily. Glyoxalase II family. In terms of assembly, monomer. Zn(2+) serves as cofactor.

It catalyses the reaction an S-(2-hydroxyacyl)glutathione + H2O = a 2-hydroxy carboxylate + glutathione + H(+). It participates in secondary metabolite metabolism; methylglyoxal degradation; (R)-lactate from methylglyoxal: step 2/2. Its function is as follows. Thiolesterase that catalyzes the hydrolysis of S-D-lactoyl-glutathione to form glutathione and D-lactic acid. The chain is Hydroxyacylglutathione hydrolase from Escherichia coli O45:K1 (strain S88 / ExPEC).